Reading from the N-terminus, the 612-residue chain is 1,8-cineole synthase, chloroplastic (612 aa).

The N-terminal 52 residues, Met-1–Thr-52, are a transit peptide targeting the chloroplast. Residues Asp-363, Asp-367, and Asp-515 each contribute to the Mg(2+) site. A DDXXD motif motif is present at residues Asp-363–Asp-367.

It belongs to the terpene synthase family. Tpsd subfamily. It depends on Mg(2+) as a cofactor. The cofactor is Mn(2+).

It localises to the plastid. It is found in the chloroplast. It catalyses the reaction (2E)-geranyl diphosphate + H2O = 1,8-cineole + diphosphate. It participates in terpene metabolism; oleoresin biosynthesis. Functionally, terpene synthase (TPS) involved in the biosynthesis of monoterpene natural products included in conifer oleoresin secretions and volatile emissions; these compounds contribute to biotic and abiotic stress defense against herbivores and pathogens. Catalyzes the conversion of (2E)-geranyl diphosphate (GPP) to 1,8-cineole. The chain is 1,8-cineole synthase, chloroplastic from Picea sitchensis (Sitka spruce).